The chain runs to 411 residues: Class E basic helix-loop-helix protein 40 (411 aa).

Positions 1–21 (MERIPSAQPPPTCLPKTPGLE) are disordered. The essential for interaction with BMAL1, E-box binding and repressor activity against the CLOCK-BMAL1 heterodimer stretch occupies residues 1–139 (MERIPSAQPP…LSGKNIEAGQ (139 aa)). The bHLH domain occupies 52 to 107 (TYKLPHRLIEKKRRDRINECIAQLKDLLPEHLKLTTLGHLEKAVVLELTLKHVKAL). The tract at residues 75–79 (LKDLL) is necessary for interaction with RXRA and repressor activity against RXRA. Residues 142–175 (FCSGFQTCAREVLQYLAKHENTRDLKSSQLVTHL) form the Orange domain. Residue Lys159 forms a Glycyl lysine isopeptide (Lys-Gly) (interchain with G-Cter in SUMO1, SUMO2 and SUMO3) linkage. Lys167 participates in a covalent cross-link: Glycyl lysine isopeptide (Lys-Gly) (interchain with G-Cter in SUMO2). The segment at 186-293 (SASRKPLDSA…EPPTKKSRMQ (108 aa)) is disordered. Position 235 is a phosphoserine (Ser235). The span at 248-271 (ELEKGDLRSEQPYFKSDHGRRFTV) shows a compositional bias: basic and acidic residues. Lys279 is covalently cross-linked (Glycyl lysine isopeptide (Lys-Gly) (interchain with G-Cter in SUMO1); alternate). Residue Lys279 forms a Glycyl lysine isopeptide (Lys-Gly) (interchain with G-Cter in SUMO1, SUMO2 and SUMO3); alternate linkage. Lys279 participates in a covalent cross-link: Glycyl lysine isopeptide (Lys-Gly) (interchain with G-Cter in SUMO2); alternate. Lys288 participates in a covalent cross-link: Glycyl lysine isopeptide (Lys-Gly) (interchain with G-Cter in SUMO2). Ser383 is modified (phosphoserine).

Homodimer. Heterodimer with BHLHE41/DEC2. Interacts with TCF3/E47. Interacts with ubiquitin-conjugating enzyme UBE2I/UBC9. Interacts with HDAC1, SUMO1, RXRA and BMAL1. Post-translationally, ubiquitinated; which may lead to proteasomal degradation. In terms of processing, sumoylation inhibits its ubiquitination and promotes its negative regulation of the CLOCK-BMAL1 heterodimer transcriptional activator activity. As to expression, expressed in heart, spleen, lung, liver, muscle, kidney, uterus and gut. Highly expressed in the cerebral cortex, especially in the fifth layer, thalamus, superior colliculus, olfactory bulb, piriform cortex, hippocampus and hypothalamic nuclei.

It is found in the cytoplasm. Its subcellular location is the nucleus. Its function is as follows. Transcriptional repressor involved in the regulation of the circadian rhythm by negatively regulating the activity of the clock genes and clock-controlled genes. Acts as the negative limb of a novel autoregulatory feedback loop (DEC loop) which differs from the one formed by the PER and CRY transcriptional repressors (PER/CRY loop). Both these loops are interlocked as it represses the expression of PER1/2 and in turn is repressed by PER1/2 and CRY1/2. Represses the activity of the circadian transcriptional activator: CLOCK-BMAL1|BMAL2 heterodimer by competing for the binding to E-box elements (5'-CACGTG-3') found within the promoters of its target genes. Negatively regulates its own expression and the expression of DBP and BHLHE41/DEC2. Acts as a corepressor of RXR and the RXR-LXR heterodimers and represses the ligand-induced RXRA and NR1H3/LXRA transactivation activity. May be involved in the regulation of chondrocyte differentiation via the cAMP pathway. Represses the transcription of NR0B2 and attentuates the transactivation of NR0B2 by the CLOCK-BMAL1 complex. Drives the circadian rhythm of blood pressure through transcriptional repression of ATP1B1 in the cardiovascular system. The polypeptide is Class E basic helix-loop-helix protein 40 (Bhlhe40) (Rattus norvegicus (Rat)).